Consider the following 85-residue polypeptide: Small ribosomal subunit protein uS17 (85 aa).

It belongs to the universal ribosomal protein uS17 family. In terms of assembly, part of the 30S ribosomal subunit.

Its function is as follows. One of the primary rRNA binding proteins, it binds specifically to the 5'-end of 16S ribosomal RNA. The protein is Small ribosomal subunit protein uS17 of Blochmanniella floridana.